The primary structure comprises 94 residues: UPF0337 protein NE2439 (94 aa).

Positions Lys-74–Thr-94 are disordered. Positions Lys-85–Thr-94 are enriched in basic residues.

This sequence belongs to the UPF0337 (CsbD) family.

The protein is UPF0337 protein NE2439 of Nitrosomonas europaea (strain ATCC 19718 / CIP 103999 / KCTC 2705 / NBRC 14298).